Here is a 385-residue protein sequence, read N- to C-terminus: Putative F-box protein At1g49610 (385 aa).

In terms of domain architecture, F-box spans 25 to 73; the sequence is VDSISSLPDVILQENLSLIPTKFAIRTSVLSKRWRHVWSETPSLDFDDC.

This is Putative F-box protein At1g49610 from Arabidopsis thaliana (Mouse-ear cress).